Here is a 135-residue protein sequence, read N- to C-terminus: ATP synthase epsilon chain (135 aa).

It belongs to the ATPase epsilon chain family. As to quaternary structure, F-type ATPases have 2 components, CF(1) - the catalytic core - and CF(0) - the membrane proton channel. CF(1) has five subunits: alpha(3), beta(3), gamma(1), delta(1), epsilon(1). CF(0) has three main subunits: a, b and c.

It is found in the cell inner membrane. In terms of biological role, produces ATP from ADP in the presence of a proton gradient across the membrane. This is ATP synthase epsilon chain from Rhodopseudomonas palustris (strain BisA53).